Reading from the N-terminus, the 347-residue chain is Phenylalanine--tRNA ligase alpha subunit (347 aa).

A Mg(2+)-binding site is contributed by glutamate 265.

Belongs to the class-II aminoacyl-tRNA synthetase family. Phe-tRNA synthetase alpha subunit type 1 subfamily. As to quaternary structure, tetramer of two alpha and two beta subunits. The cofactor is Mg(2+).

Its subcellular location is the cytoplasm. It carries out the reaction tRNA(Phe) + L-phenylalanine + ATP = L-phenylalanyl-tRNA(Phe) + AMP + diphosphate + H(+). The sequence is that of Phenylalanine--tRNA ligase alpha subunit from Mycolicibacterium vanbaalenii (strain DSM 7251 / JCM 13017 / BCRC 16820 / KCTC 9966 / NRRL B-24157 / PYR-1) (Mycobacterium vanbaalenii).